An 825-amino-acid polypeptide reads, in one-letter code: Interleukin-4 receptor subunit alpha (825 aa).

An N-terminal signal peptide occupies residues methionine 1–asparagine 25. Over methionine 26–histidine 232 the chain is Extracellular. A disulfide bridge connects residues cysteine 34 and cysteine 44. An N-linked (GlcNAc...) asparagine glycan is attached at asparagine 53. Residues cysteine 74 and cysteine 86 are joined by a disulfide bond. Asparagine 98, asparagine 128, asparagine 134, asparagine 176, and asparagine 209 each carry an N-linked (GlcNAc...) asparagine glycan. The Fibronectin type-III domain maps to alanine 125 to serine 224. The WSXWS motif motif lies at tryptophan 212–serine 216. The helical transmembrane segment at leucine 233–threonine 256 threads the bilayer. At lysine 257 to serine 825 the chain is on the cytoplasmic side. The short motif at tryptophan 262 to alanine 270 is the Box 1 motif element. Disordered regions lie at residues glutamate 373 to glutamate 397 and leucine 433 to threonine 485. The required for IRS1 activation and IL4-induced cell growth stretch occupies residues glycine 437–asparagine 557. Polar residues predominate over residues proline 475–threonine 485. Residues tyrosine 497, tyrosine 575, tyrosine 603, and tyrosine 631 each carry the phosphotyrosine modification. The tract at residues valine 558–leucine 657 is required for IL4-induced gene expression. The interval proline 651–leucine 703 is disordered. The segment covering proline 665–histidine 677 has biased composition (low complexity). Residues leucine 678–proline 690 are compositionally biased toward basic and acidic residues. An ITIM motif motif is present at residues isoleucine 711 to leucine 716. The interval proline 782–proline 809 is disordered.

The protein belongs to the type I cytokine receptor family. Type 4 subfamily. In terms of assembly, the functional IL4 receptor is formed by initial binding of IL4 to IL4R. Subsequent recruitment to the complex of the common gamma chain, in immune cells, creates a type I receptor and, in non-immune cells, of IL13RA1 forms a type II receptor. IL4R can also interact with the IL13/IL13RA1 complex to form a similar type II receptor. Interacts with PIK3C3. Interacts with the SH2-containing phosphatases, PTPN6/SHIP1, PTPN11/SHIP2 and INPP5D/SHIP. Interacts with JAK1 through a Box 1-containing region; inhibited by SOCS5. Interacts with SOCS5; inhibits IL4 signaling. Interacts with JAK3. Interacts with CLM1. Interacts with IL13RA2. On IL4 binding, phosphorylated on C-terminal tyrosine residues. Phosphorylation on any one of tyrosine residues, Tyr-575, Tyr-603 or Tyr-631, is required for STAT6-induced gene induction. Post-translationally, the soluble form (sIL4R/IL4BP) can also be produced by proteolytic cleavage at the cell surface (shedding) by a metalloproteinase. In terms of tissue distribution, isoform 1 and isoform 2 are highly expressed in activated T-cells.

Its subcellular location is the cell membrane. The protein localises to the secreted. Functionally, receptor for both interleukin 4 and interleukin 13. Couples to the JAK1/2/3-STAT6 pathway. The IL4 response is involved in promoting Th2 differentiation. The IL4/IL13 responses are involved in regulating IgE production and, chemokine and mucus production at sites of allergic inflammation. In certain cell types, can signal through activation of insulin receptor substrates, IRS1/IRS2. Its function is as follows. Soluble IL4R (sIL4R) inhibits IL4-mediated cell proliferation and IL5 up-regulation by T-cells. This is Interleukin-4 receptor subunit alpha (IL4R) from Homo sapiens (Human).